The following is a 326-amino-acid chain: UDP-3-O-acylglucosamine N-acyltransferase (326 aa).

H225 acts as the Proton acceptor in catalysis.

This sequence belongs to the transferase hexapeptide repeat family. LpxD subfamily. Homotrimer.

It catalyses the reaction a UDP-3-O-[(3R)-3-hydroxyacyl]-alpha-D-glucosamine + a (3R)-hydroxyacyl-[ACP] = a UDP-2-N,3-O-bis[(3R)-3-hydroxyacyl]-alpha-D-glucosamine + holo-[ACP] + H(+). It functions in the pathway bacterial outer membrane biogenesis; LPS lipid A biosynthesis. In terms of biological role, catalyzes the N-acylation of UDP-3-O-acylglucosamine using 3-hydroxyacyl-ACP as the acyl donor. Is involved in the biosynthesis of lipid A, a phosphorylated glycolipid that anchors the lipopolysaccharide to the outer membrane of the cell. This Acidovorax ebreus (strain TPSY) (Diaphorobacter sp. (strain TPSY)) protein is UDP-3-O-acylglucosamine N-acyltransferase.